The sequence spans 441 residues: D-inositol 3-phosphate glycosyltransferase (441 aa).

His-38 lines the 1D-myo-inositol 3-phosphate pocket. UDP-N-acetyl-alpha-D-glucosamine is bound by residues Gln-44–Pro-45 and Gly-52. Residues Asp-49–Asn-54, Lys-107, Tyr-140, Thr-164, and Arg-184 contribute to the 1D-myo-inositol 3-phosphate site. UDP-N-acetyl-alpha-D-glucosamine is bound by residues Arg-258, Lys-263, and Gln-316. The Mg(2+) site is built by Phe-325, Gln-326, and Ala-328. UDP-N-acetyl-alpha-D-glucosamine-binding residues include Glu-338 and Glu-346. Position 352 (Thr-352) interacts with Mg(2+).

The protein belongs to the glycosyltransferase group 1 family. MshA subfamily. Homodimer.

The enzyme catalyses 1D-myo-inositol 3-phosphate + UDP-N-acetyl-alpha-D-glucosamine = 1D-myo-inositol 2-acetamido-2-deoxy-alpha-D-glucopyranoside 3-phosphate + UDP + H(+). Catalyzes the transfer of a N-acetyl-glucosamine moiety to 1D-myo-inositol 3-phosphate to produce 1D-myo-inositol 2-acetamido-2-deoxy-glucopyranoside 3-phosphate in the mycothiol biosynthesis pathway. In Mycolicibacterium paratuberculosis (strain ATCC BAA-968 / K-10) (Mycobacterium paratuberculosis), this protein is D-inositol 3-phosphate glycosyltransferase.